The primary structure comprises 446 residues: Methanol utilization control sensor protein MoxY (446 aa).

3 helical membrane-spanning segments follow: residues 1-21 (MGLA…ILIV), 101-121 (WFSA…THYP), and 144-164 (FSII…LAFL). Residues 167 to 219 (TLLTRRLQSVQAAMAQMQDGRLSVRAPDDRLTEFADLAAGVNALASHLQAEQA) enclose the HAMP domain. A disordered region spans residues 390–409 (TDNGKGPQSGTGRPTPGFGQ).

The protein resides in the cell inner membrane. Its function is as follows. Member of the two-component regulatory system MoxY/MoxX probably involved in the regulation of the methanol dehydrogenase expression. May function as a membrane-associated protein kinase that phosphorylates MoxX in response to environmental signals. The protein is Methanol utilization control sensor protein MoxY (moxY) of Paracoccus denitrificans.